Here is a 140-residue protein sequence, read N- to C-terminus: Ribosomal RNA large subunit methyltransferase H (140 aa).

2 residues coordinate S-adenosyl-L-methionine: Leu-55 and Gly-87.

Belongs to the RNA methyltransferase RlmH family. As to quaternary structure, homodimer.

The protein localises to the cytoplasm. It carries out the reaction pseudouridine(1915) in 23S rRNA + S-adenosyl-L-methionine = N(3)-methylpseudouridine(1915) in 23S rRNA + S-adenosyl-L-homocysteine + H(+). In terms of biological role, specifically methylates the pseudouridine at position 1915 (m3Psi1915) in 23S rRNA. This is Ribosomal RNA large subunit methyltransferase H from Erythrobacter litoralis (strain HTCC2594).